The following is a 153-amino-acid chain: Fucose mutarotase (153 aa).

H24 functions as the Proton donor in the catalytic mechanism. D32 contacts substrate. D69 is a catalytic residue. Positions 79, 119, 137, and 139 each coordinate substrate. The active site involves Y119.

Belongs to the RbsD / FucU family. As to quaternary structure, mainly homodimer, but also exists as homotetramer, homooctamer, and homodecamer. The homodimeric form seems catalytically inactive.

It carries out the reaction alpha-L-fucose = beta-L-fucose. Its pathway is carbohydrate metabolism; L-fucose metabolism. Involved in the interconversion between alpha- and beta-L-fucoses. L-Fucose (6-deoxy-L-galactose) exists as alpha-L-fucose (29.5%) and beta-L-fucose (70.5%), the beta-form is metabolized through the salvage pathway. GDP-L-fucose formed either by the de novo or salvage pathways is transported into the endoplasmic reticulum, where it serves as a substrate for N- and O-glycosylations by fucosyltransferases. Fucosylated structures expressed on cell surfaces or secreted in biological fluids are believed to play a critical role in cell-cell adhesion and recognition processes. The polypeptide is Fucose mutarotase (FUOM) (Bos taurus (Bovine)).